The chain runs to 261 residues: MEMO1 family protein AF_2310 (261 aa).

It belongs to the MEMO1 family.

The polypeptide is MEMO1 family protein AF_2310 (Archaeoglobus fulgidus (strain ATCC 49558 / DSM 4304 / JCM 9628 / NBRC 100126 / VC-16)).